Here is a 178-residue protein sequence, read N- to C-terminus: Protein RICE FLOWERING LOCUS T 1 (178 aa).

It belongs to the phosphatidylethanolamine-binding protein family. Interacts with FTIP1. In terms of tissue distribution, expressed in leaf vascular tissues. Specifically expressed in the phloem including companion cells.

The protein resides in the cytoplasm. Its subcellular location is the nucleus. The protein localises to the endoplasmic reticulum. Its function is as follows. Probable mobile flower-promoting signal (florigen) that moves from the leaf to the shoot apical meristem (SAM) and induces flowering. Promotes the transition from vegetative growth to flowering under long day (LD) conditions. Acts upstream of MADS14 and MADS15. May also participate in the promotion of flowering under short day (SD) conditions. This Oryza sativa subsp. japonica (Rice) protein is Protein RICE FLOWERING LOCUS T 1.